Reading from the N-terminus, the 396-residue chain is Probable sugar efflux transporter (396 aa).

Over 1-14 the chain is Cytoplasmic; the sequence is MTINPVSRKVAWLR. A helical transmembrane segment spans residues 15 to 35; the sequence is VVTLAIAAFIFNTTEFVPVGL. At 36–49 the chain is on the periplasmic side; it reads LSDIAESFHMQTAQ. A helical transmembrane segment spans residues 50-70; sequence VGIMLTIYAWVVAVMSLPFML. The Cytoplasmic portion of the chain corresponds to 71–80; sequence LTSQMERRKL. Residues 81 to 101 traverse the membrane as a helical segment; it reads LIYLFVLFIASHVLSFLAWNF. A topological domain (periplasmic) is located at residue Thr-102. A helical transmembrane segment spans residues 103–123; the sequence is VLVISRIGIAFAHAIFWSITA. Over 124–135 the chain is Cytoplasmic; sequence SLAIRLAPAGKR. Residues 136 to 156 traverse the membrane as a helical segment; that stretch reads AQALSLIATGTALAMVLGLPI. Topologically, residues 157-168 are periplasmic; the sequence is GRVVGQYFGWRT. A helical membrane pass occupies residues 169–189; the sequence is TFFAIGMGALITLLCLIKLLP. Residues 190-208 are Cytoplasmic-facing; it reads KLPSEHSGSLKSLPLLFRR. Residues 209-229 traverse the membrane as a helical segment; that stretch reads PALMSLYVLTVVVVTAHYTAY. Over 230–245 the chain is Periplasmic; sequence SYIEPFVQNVAGLSAN. Residues 246–266 form a helical membrane-spanning segment; that stretch reads FATVLLLILGGAGIIGSLVFG. The Cytoplasmic portion of the chain corresponds to 267 to 274; the sequence is KLGNRHAS. The helical transmembrane segment at 275 to 295 threads the bilayer; it reads SLVSIAIALLVVCLLLLLPAA. Residues 296-300 are Periplasmic-facing; it reads ESEAH. The chain crosses the membrane as a helical span at residues 301-321; it reads LAILSIFWGIAIMVIGLGMQV. Residues 322–332 are Cytoplasmic-facing; it reads KVLALAPDATD. A helical transmembrane segment spans residues 333–353; the sequence is VAMALFSGIFNIGIGAGALVG. Over 354–363 the chain is Periplasmic; it reads NQVSLHWSMS. A helical membrane pass occupies residues 364–384; that stretch reads AIGYIGAIPACAALVWAVLIF. Residues 385–396 lie on the Cytoplasmic side of the membrane; that stretch reads RKWPVTLEEQPH.

This sequence belongs to the major facilitator superfamily. SotB (TC 2.A.1.2) family.

The protein resides in the cell inner membrane. Its function is as follows. Involved in the efflux of sugars. The physiological role may be the reduction of the intracellular concentration of toxic sugars or sugar metabolites. In Salmonella typhimurium (strain LT2 / SGSC1412 / ATCC 700720), this protein is Probable sugar efflux transporter.